The sequence spans 614 residues: MILAPLKSRILIALAASALLIPAVASAQSTDVWRKGISTVGELKHPDGFDHFDYVNTKAPKGGTLRLSTSGTFDTLNPLLAKGERATGLSLVYDTLMKSTEEELSASYGLLAEGVSYPDDIEKATFRLRQDAKWADGKPVTPEDVVFSFEKAKDLSPQLATYYTHVTKAEVSGERDITFTFDEKNNRELPQIVGQLLIVPKHWWEGTGPDGKPRDISRGTLEPVMGSGPYKIAAVSPGSSVTYERRDDYWGKDVNVNVGMNNFKTIAYTFFADQDVEFQAFKSGTVDFRQEASSSRWVTGYDFPAVKEGRVKKEELPNIYRSVGIMQAFVPNMRREKFQNPKLRKALNYAFDFEELNRTLAYGQFQRITSFFMGSELASSGLPTGRELEILQELKDQVPPEVFTTEYRNPVAGDPAKQRDNLREAVKLMKEAGYELRGNRMVNAATGQQLDMEFLIDSSGMERTILPYVQNLKKIGINATIRTVDASQYTNRTRSFDFDVTIKLWATSANPGNEQADFWGSAAADRQGSNNLAGIKNPAVDALVRKVIFAPNRDEQVAAARALDRVLLANSYVIPQFYRGEMFIAYWNTLIRPENLPEYGVGFPDAWWSGKAGN.

Residues 1–27 (MILAPLKSRILIALAASALLIPAVASA) form the signal peptide.

Belongs to the bacterial solute-binding protein 5 family. As to quaternary structure, the complex is composed of one ATP-binding protein (YejF), two transmembrane proteins (YejB and YejE) and a solute-binding protein (YejA).

It localises to the periplasm. In terms of biological role, probably part of the ABC transporter complex YejABEF, which is likely involved in broad-spectrum peptide import. The chain is Probable peptide-binding protein YejA from Agrobacterium fabrum (strain C58 / ATCC 33970) (Agrobacterium tumefaciens (strain C58)).